We begin with the raw amino-acid sequence, 381 residues long: Protein TRIGALACTOSYLDIACYLGLYCEROL 2, chloroplastic (381 aa).

Residues 1-45 (MIGNPVIQVPSSLMPSSSMIACPRVSPNGVPYLPPKPRTRHLVVR) constitute a chloroplast transit peptide. Over 46 to 96 (AASNSDAAHGQPSSDGGKNPLTVVLDVPRNIWRQTLKPLSDFGFGKRSIWE) the chain is Stromal. The helical transmembrane segment at 97–117 (GGVGLFIVSGATLLALSWAWL) threads the bilayer. Residues 118–381 (RGFQMRSKFR…LLIKSLSRLL (264 aa)) are Chloroplast intermembrane-facing.

As to quaternary structure, homomultimer. Substrate-binding subunit of the TGD complex, a lipid translocator at the inner chloroplast envelope membrane made of TGD1, TGD2 and TGD3. Interacts with TGD1 and TGD3 with an overall subunit stoichiometry of 2 TGD1, 2 TGD3 and 8 to 12 TGD2. Interacts with TGD5.

The protein localises to the plastid. It localises to the chloroplast inner membrane. In terms of biological role, component of a phosphatidic acid/lipid transport complex in the chloroplast envelope. Specifically binds phosphatidic acid (PA). Involved in lipid transfer from the endoplasmic reticulum (ER) to plastids, and necessary for thylakoids formation. This Arabidopsis thaliana (Mouse-ear cress) protein is Protein TRIGALACTOSYLDIACYLGLYCEROL 2, chloroplastic.